The following is a 485-amino-acid chain: Probable glycine dehydrogenase (decarboxylating) subunit 2 (485 aa).

Position 273 is an N6-(pyridoxal phosphate)lysine (Lys-273).

The protein belongs to the GcvP family. C-terminal subunit subfamily. As to quaternary structure, the glycine cleavage system is composed of four proteins: P, T, L and H. In this organism, the P 'protein' is a heterodimer of two subunits. The cofactor is pyridoxal 5'-phosphate.

The enzyme catalyses N(6)-[(R)-lipoyl]-L-lysyl-[glycine-cleavage complex H protein] + glycine + H(+) = N(6)-[(R)-S(8)-aminomethyldihydrolipoyl]-L-lysyl-[glycine-cleavage complex H protein] + CO2. In terms of biological role, the glycine cleavage system catalyzes the degradation of glycine. The P protein binds the alpha-amino group of glycine through its pyridoxal phosphate cofactor; CO(2) is released and the remaining methylamine moiety is then transferred to the lipoamide cofactor of the H protein. The protein is Probable glycine dehydrogenase (decarboxylating) subunit 2 of Caldanaerobacter subterraneus subsp. tengcongensis (strain DSM 15242 / JCM 11007 / NBRC 100824 / MB4) (Thermoanaerobacter tengcongensis).